The primary structure comprises 506 residues: Catalase (506 aa).

Catalysis depends on residues His73 and Asn146. Tyr356 lines the heme pocket. The short motif at 504-506 (SKF) is the Microbody targeting signal element.

The protein belongs to the catalase family. As to quaternary structure, homotetramer. It depends on heme as a cofactor.

It is found in the peroxisome matrix. The enzyme catalyses 2 H2O2 = O2 + 2 H2O. In terms of biological role, catalyzes the degradation of hydrogen peroxide (H(2)O(2)) generated by peroxisomal oxidases to water and oxygen, thereby protecting cells from the toxic effects of hydrogen peroxide. This Drosophila melanogaster (Fruit fly) protein is Catalase (Cat).